The sequence spans 266 residues: Thymidylate synthase (266 aa).

R24 serves as a coordination point for dUMP. A (6R)-5,10-methylene-5,6,7,8-tetrahydrofolate-binding site is contributed by H54. 129-130 (RR) serves as a coordination point for dUMP. The active-site Nucleophile is C149. Residues 169–172 (RSAD), N180, and 210–212 (HIY) contribute to the dUMP site. D172 is a (6R)-5,10-methylene-5,6,7,8-tetrahydrofolate binding site. A265 contacts (6R)-5,10-methylene-5,6,7,8-tetrahydrofolate.

Belongs to the thymidylate synthase family. Bacterial-type ThyA subfamily. As to quaternary structure, homodimer.

It localises to the cytoplasm. It catalyses the reaction dUMP + (6R)-5,10-methylene-5,6,7,8-tetrahydrofolate = 7,8-dihydrofolate + dTMP. The protein operates within pyrimidine metabolism; dTTP biosynthesis. In terms of biological role, catalyzes the reductive methylation of 2'-deoxyuridine-5'-monophosphate (dUMP) to 2'-deoxythymidine-5'-monophosphate (dTMP) while utilizing 5,10-methylenetetrahydrofolate (mTHF) as the methyl donor and reductant in the reaction, yielding dihydrofolate (DHF) as a by-product. This enzymatic reaction provides an intracellular de novo source of dTMP, an essential precursor for DNA biosynthesis. This is Thymidylate synthase from Mycobacterium avium (strain 104).